Reading from the N-terminus, the 229-residue chain is Cytochrome b translational activator protein CBS1, mitochondrial (229 aa).

A mitochondrion-targeting transit peptide spans 1–25 (MLRTKVFATTVARISGIRRYIPIRT).

Its subcellular location is the mitochondrion inner membrane. Functionally, mRNA-specific translational activator of cytochrome b. The cytochrome b (COB) leader RNA may represent the target sequence for CBS1 and CBS2, tethering the COB mRNA to the inner mitochondrial membrane, where cotranslational insertion of cytochrome b into the membrane can occur. This chain is Cytochrome b translational activator protein CBS1, mitochondrial (CBS1), found in Saccharomyces cerevisiae (strain ATCC 204508 / S288c) (Baker's yeast).